The chain runs to 962 residues: Exportin-T (962 aa).

At M1 the chain carries N-acetylmethionine. Position 634 is an N6-acetyllysine (K634).

Found in a complex with XPOT, Ran and tRNA. Probably found in a complex with nucleoporins. Interacts with Ran and tRNA in a GTP-dependent manner.

It localises to the nucleus. Its subcellular location is the cytoplasm. Mediates the nuclear export of aminoacylated tRNAs. In the nucleus binds to tRNA and to the GTPase Ran in its active GTP-bound form. Docking of this trimeric complex to the nuclear pore complex (NPC) is mediated through binding to nucleoporins. Upon transit of a nuclear export complex into the cytoplasm, disassembling of the complex and hydrolysis of Ran-GTP to Ran-GDP (induced by RANBP1 and RANGAP1, respectively) cause release of the tRNA from the export receptor. XPOT then return to the nuclear compartment and mediate another round of transport. The directionality of nuclear export is thought to be conferred by an asymmetric distribution of the GTP- and GDP-bound forms of Ran between the cytoplasm and nucleus. The chain is Exportin-T (XPOT) from Pongo abelii (Sumatran orangutan).